Consider the following 207-residue polypeptide: MDVLGIDEAGRGSVLGPLVIAGVIVPEKMDIVLERMGVKDSKRLTPNRRTILSRKLKKMFEYDLVVISAQDIDNMRADGINLNEIERIGMEKILSNLNPEKAIVDAVDIKAERFQNKLANDTGVNVVAEHKADDNYIEVSAASIIAKQERDAHIAEINKDYIKMGGIGSGYPSDPITKKFLTNFTYDEMPDFVRKSWATVEKMKNSQ.

In terms of domain architecture, RNase H type-2 spans 1–207 (MDVLGIDEAG…ATVEKMKNSQ (207 aa)). Residues Asp-7, Glu-8, and Asp-105 each coordinate a divalent metal cation.

Belongs to the RNase HII family. Mn(2+) is required as a cofactor. It depends on Mg(2+) as a cofactor.

Its subcellular location is the cytoplasm. The enzyme catalyses Endonucleolytic cleavage to 5'-phosphomonoester.. Endonuclease that specifically degrades the RNA of RNA-DNA hybrids. This Methanobrevibacter smithii (strain ATCC 35061 / DSM 861 / OCM 144 / PS) protein is Ribonuclease HII.